The primary structure comprises 409 residues: Terpredoxin reductase (409 aa).

An FAD-binding site is contributed by 7–38 (TTVIVGAGHAGTAAAFFLREFGYHGRVLLLSA). 151-159 (GGGFIGLEI) lines the NAD(+) pocket.

It depends on FAD as a cofactor.

Its function is as follows. The oxidation of alpha-terpineol by cytochrome p450-TERP requires the participation of a flavoprotein, terpredoxin reductase, and an iron-sulfur protein, terpredoxin, to mediate the transfer of electrons from NADH to P450 for oxygen activation. In Pseudomonas sp, this protein is Terpredoxin reductase (terPA).